A 142-amino-acid chain; its full sequence is Hemoglobin subunit alpha-4 (142 aa).

The 141-residue stretch at 2–142 folds into the Globin domain; that stretch reads TLTDSDKAAI…VATVLTSKYR (141 aa). H59 lines the O2 pocket. Heme b is bound at residue H88.

This sequence belongs to the globin family. As to quaternary structure, heterotetramer of two alpha chains and two beta chains. In terms of tissue distribution, red blood cells.

This is a larval (tadpole) alpha-globin. This Xenopus laevis (African clawed frog) protein is Hemoglobin subunit alpha-4 (hba4).